The following is a 391-amino-acid chain: Phosphoglycerate kinase (391 aa).

Substrate contacts are provided by residues 19 to 21 (DYN), arginine 35, 58 to 61 (HMGR), arginine 117, and arginine 150. Residues lysine 201, glutamate 323, and 349–352 (GGDT) each bind ATP.

This sequence belongs to the phosphoglycerate kinase family. As to quaternary structure, monomer.

The protein localises to the cytoplasm. The enzyme catalyses (2R)-3-phosphoglycerate + ATP = (2R)-3-phospho-glyceroyl phosphate + ADP. The protein operates within carbohydrate degradation; glycolysis; pyruvate from D-glyceraldehyde 3-phosphate: step 2/5. This chain is Phosphoglycerate kinase, found in Desulforapulum autotrophicum (strain ATCC 43914 / DSM 3382 / VKM B-1955 / HRM2) (Desulfobacterium autotrophicum).